The sequence spans 89 residues: Small ribosomal subunit protein uS19 (89 aa).

It belongs to the universal ribosomal protein uS19 family.

Its function is as follows. Protein S19 forms a complex with S13 that binds strongly to the 16S ribosomal RNA. The protein is Small ribosomal subunit protein uS19 of Akkermansia muciniphila (strain ATCC BAA-835 / DSM 22959 / JCM 33894 / BCRC 81048 / CCUG 64013 / CIP 107961 / Muc).